We begin with the raw amino-acid sequence, 682 residues long: Penicillin-binding protein activator LpoA (682 aa).

Residues Met-1 to Ala-26 form the signal peptide. The N-palmitoyl cysteine moiety is linked to residue Cys-27. Cys-27 is lipidated: S-diacylglycerol cysteine.

This sequence belongs to the LpoA family. Interacts with PBP1a.

The protein localises to the cell outer membrane. Regulator of peptidoglycan synthesis that is essential for the function of penicillin-binding protein 1A (PBP1a). The sequence is that of Penicillin-binding protein activator LpoA from Edwardsiella ictaluri (strain 93-146).